We begin with the raw amino-acid sequence, 482 residues long: NADH-quinone oxidoreductase subunit N (482 aa).

Helical transmembrane passes span 11-31, 37-57, 77-97, 106-126, 131-151, 166-186, 208-228, 255-275, 279-299, 304-324, 332-352, 376-396, 404-424, and 462-482; these read AVPEMFVLFMALVILLAGVFI, IPYYLTQITLILVAGLTWYIF, RFSVYLKLFIYLSVFFAFIYA, IPHTEFYVLGLLSMLGMVALV, LLTVFLGLELLSLPTYAMVAL, FVIGAIASGMLLYGMSMIFGA, LILVFGLVFIVAGVAFKLGTA, IAAYAMIIRLLILGMPALHVQ, MLIVVAILSMGIGNFAAIVQS, MLAYSSIAHMGYMLLGVLCGT, MFYTITYSLMSLGAFGMVVLM, AFMMMLILFSLAGVPPLVGFI, ALIQVHLVWLAVLAVLFAIVG, and LAVLFIGIFPGWLYALSHLAF.

The protein belongs to the complex I subunit 2 family. NDH-1 is composed of 14 different subunits. Subunits NuoA, H, J, K, L, M, N constitute the membrane sector of the complex.

It is found in the cell inner membrane. It catalyses the reaction a quinone + NADH + 5 H(+)(in) = a quinol + NAD(+) + 4 H(+)(out). NDH-1 shuttles electrons from NADH, via FMN and iron-sulfur (Fe-S) centers, to quinones in the respiratory chain. The immediate electron acceptor for the enzyme in this species is believed to be ubiquinone. Couples the redox reaction to proton translocation (for every two electrons transferred, four hydrogen ions are translocated across the cytoplasmic membrane), and thus conserves the redox energy in a proton gradient. The polypeptide is NADH-quinone oxidoreductase subunit N (Coxiella burnetii (strain RSA 493 / Nine Mile phase I)).